Here is a 331-residue protein sequence, read N- to C-terminus: MTLAHSLSFPDSLRDGPTVGDLGEFEVIRVITEQAGSSLNGDDAAVLRHASPNSRAVVTTDMLVAGRHFQLDWSTPEQIGQKAIVQNFADIEAMGARPVAALLAISAPTHTPVEFVRGLARGMNQRLEEYSAELVGGDITSGDSLVIAVTAIGQLGGSLPELTLGRARPGQTLVAHGKIGYSAAGLALLQHFGPDNVPEHLRPLVDAHCAPVLTPGRGMVARAAGATAMTDNSDGLIVDLNQMAMKSGVRIDVDSSSISPDELLSEAASVLGTDAWRWILSGGEDHTLLSTTFGDAPSGFRTIGQVTKTRHEDLVTVDKKTPAFSDGWRSF.

Asp43, Thr59, Thr60, and Asp61 together coordinate Mg(2+). His68 provides a ligand contact to substrate. The Mg(2+) site is built by Asp90, Asp138, and Asp231. ATP is bound at residue 137 to 138 (GD). Ser233 contacts ATP. Asp234 contributes to the Mg(2+) binding site. Residues Glu284 and Trp328 each coordinate substrate.

Belongs to the thiamine-monophosphate kinase family.

The catalysed reaction is thiamine phosphate + ATP = thiamine diphosphate + ADP. The protein operates within cofactor biosynthesis; thiamine diphosphate biosynthesis; thiamine diphosphate from thiamine phosphate: step 1/1. Functionally, catalyzes the ATP-dependent phosphorylation of thiamine-monophosphate (TMP) to form thiamine-pyrophosphate (TPP), the active form of vitamin B1. In Corynebacterium glutamicum (strain ATCC 13032 / DSM 20300 / JCM 1318 / BCRC 11384 / CCUG 27702 / LMG 3730 / NBRC 12168 / NCIMB 10025 / NRRL B-2784 / 534), this protein is Thiamine-monophosphate kinase.